Reading from the N-terminus, the 1066-residue chain is Ankyrin repeat protein nuc-2 (1066 aa).

Residues 1–166 (MKFGKQIQKR…KSKTKELYLS (166 aa)) enclose the SPX domain. ANK repeat units follow at residues 268 to 298 (RVTRTFLASINEGSLEALKVLLDTGLVDIQS), 336 to 366 (YGRVPLHYASMHGRLDMIDALLNASPKTINL), 370 to 399 (DNFTPLVHSIVRNHLECVGRLLERSARIDP), 403 to 432 (TDHVPLNLACQHGSVAIVELLLKHGAKILA), 435 to 465 (EGLYPQHLVARSGQTPEILVLLKQYGADLDQ), 470 to 499 (YGWTPLVHAASEGNVPCLQALLETGADPNI), and 503 to 532 (KDLPAMYYAAWEGHLECMKLLTPAKKEKAA). The 332-residue stretch at 717 to 1048 (ITDFETYWKA…DPFPKLPKGV (332 aa)) folds into the GP-PDE domain. The segment at 923–963 (KQQQQGSCSKGDGDEDMGGTTAASRREAADERTLQSDGRRT) is disordered. Residues 946–962 (SRREAADERTLQSDGRR) are compositionally biased toward basic and acidic residues.

In terms of biological role, controls phosphorus acquisition. This Neurospora crassa (strain ATCC 24698 / 74-OR23-1A / CBS 708.71 / DSM 1257 / FGSC 987) protein is Ankyrin repeat protein nuc-2 (nuc-2).